The primary structure comprises 295 residues: Glycine--tRNA ligase alpha subunit (295 aa).

The protein belongs to the class-II aminoacyl-tRNA synthetase family. As to quaternary structure, tetramer of two alpha and two beta subunits.

Its subcellular location is the cytoplasm. The enzyme catalyses tRNA(Gly) + glycine + ATP = glycyl-tRNA(Gly) + AMP + diphosphate. In Thermosynechococcus vestitus (strain NIES-2133 / IAM M-273 / BP-1), this protein is Glycine--tRNA ligase alpha subunit.